Reading from the N-terminus, the 652-residue chain is Probable protein phosphatase 2C 19 (652 aa).

The PPM-type phosphatase domain maps to 265–517; sequence KYVVSSMQGW…DNTTVILVLF (253 aa). Residues Asp300, Gly301, Glu467, and Asp508 each contribute to the Mn(2+) site. A disordered region spans residues 524–567; sequence AVPPVDTDTDTDSHTGDDVDNNDPANEVDPTANAGSDDSNTSDE.

The protein belongs to the PP2C family. It depends on Mg(2+) as a cofactor. Mn(2+) is required as a cofactor.

It catalyses the reaction O-phospho-L-seryl-[protein] + H2O = L-seryl-[protein] + phosphate. It carries out the reaction O-phospho-L-threonyl-[protein] + H2O = L-threonyl-[protein] + phosphate. This Oryza sativa subsp. japonica (Rice) protein is Probable protein phosphatase 2C 19.